We begin with the raw amino-acid sequence, 185 residues long: Ribosome-recycling factor (185 aa).

The protein belongs to the RRF family.

It localises to the cytoplasm. Responsible for the release of ribosomes from messenger RNA at the termination of protein biosynthesis. May increase the efficiency of translation by recycling ribosomes from one round of translation to another. In Bacillus anthracis (strain CDC 684 / NRRL 3495), this protein is Ribosome-recycling factor.